A 140-amino-acid polypeptide reads, in one-letter code: Endoribonuclease YbeY (140 aa).

Residues His101, His105, and His111 each coordinate Zn(2+).

This sequence belongs to the endoribonuclease YbeY family. Requires Zn(2+) as cofactor.

It is found in the cytoplasm. Functionally, single strand-specific metallo-endoribonuclease involved in late-stage 70S ribosome quality control and in maturation of the 3' terminus of the 16S rRNA. The polypeptide is Endoribonuclease YbeY (Aliarcobacter butzleri (strain RM4018) (Arcobacter butzleri)).